We begin with the raw amino-acid sequence, 323 residues long: Beta-ketoacyl-[acyl-carrier-protein] synthase III (323 aa).

Active-site residues include C114 and H250. The ACP-binding stretch occupies residues Q251–R255. The active site involves N280.

The protein belongs to the thiolase-like superfamily. FabH family. Homodimer.

It localises to the cytoplasm. The catalysed reaction is malonyl-[ACP] + acetyl-CoA + H(+) = 3-oxobutanoyl-[ACP] + CO2 + CoA. It functions in the pathway lipid metabolism; fatty acid biosynthesis. In terms of biological role, catalyzes the condensation reaction of fatty acid synthesis by the addition to an acyl acceptor of two carbons from malonyl-ACP. Catalyzes the first condensation reaction which initiates fatty acid synthesis and may therefore play a role in governing the total rate of fatty acid production. Possesses both acetoacetyl-ACP synthase and acetyl transacylase activities. Its substrate specificity determines the biosynthesis of branched-chain and/or straight-chain of fatty acids. This Hyphomonas neptunium (strain ATCC 15444) protein is Beta-ketoacyl-[acyl-carrier-protein] synthase III.